We begin with the raw amino-acid sequence, 912 residues long: Putative respiratory burst oxidase homolog protein J (912 aa).

2 disordered regions span residues 1–51 (MKNN…GGGI) and 73–112 (WRKS…RTTS). Residues 1-323 (MKNNKKVGTE…VVVTAELMYE (323 aa)) lie on the Cytoplasmic side of the membrane. Polar residues-rich tracts occupy residues 29-44 (SVKQ…NPES) and 78-87 (NLGSPSTRKS). 2 EF-hand-like regions span residues 147 to 155 (AVDGRLPKD) and 181 to 193 (RQIK…DKEQ). Residues 205–240 (DLDCRLQIFFDMCDKDGDGKLTEEEVKEVIVLSASA) enclose the EF-hand domain. Positions 218, 220, 222, 224, and 229 each coordinate Ca(2+). At serine 294 the chain carries Phosphoserine. A helical transmembrane segment spans residues 324 to 344 (HWKKIWVVTLWLAVNVVLFMW). The Extracellular segment spans residues 345–363 (KYEEFTTSPLYNITGRCLC). The helical transmembrane segment at 364–384 (AAKGTAEILKLNMALILVPVL) threads the bilayer. In terms of domain architecture, Ferric oxidoreductase spans 366–523 (KGTAEILKLN…LLVIAYALLI (158 aa)). Residues 385–410 (RRTLTFLRSTFLNHLIPFDDNINFHK) lie on the Cytoplasmic side of the membrane. A helical membrane pass occupies residues 411 to 431 (LIAVAIAVISLLHTALHMLCN). The Extracellular portion of the chain corresponds to 432–458 (YPRLSSCPYNFYSDYAGNLLGAKQPTY). A helical membrane pass occupies residues 459-479 (LGLMLTPVSVTGVLMIIFMGI). Topologically, residues 480–510 (SFTLAMHYFRRNIVKLPIPFNRLAGFNSFWY) are cytoplasmic. The chain crosses the membrane as a helical span at residues 511 to 531 (AHHLLVIAYALLIIHGYILII). The Extracellular portion of the chain corresponds to 532-697 (EKPWYQKTTW…PYGAPAQSYQ (166 aa)). Residues 562-695 (EHNHRVHIIK…KGPYGAPAQS (134 aa)) enclose the FAD-binding FR-type domain. The helical transmembrane segment at 698 to 718 (KFDILLLIGLGIGATPFISIL) threads the bilayer. At 719 to 912 (KDMLNNLKPG…TRFTFHKENF (194 aa)) the chain is on the cytoplasmic side.

The protein belongs to the RBOH (TC 5.B.1.3) family. In terms of assembly, monomer and homodimer.

Its subcellular location is the membrane. Functionally, calcium-dependent NADPH oxidase that generates superoxide. The protein is Putative respiratory burst oxidase homolog protein J (RBOHJ) of Arabidopsis thaliana (Mouse-ear cress).